Reading from the N-terminus, the 427-residue chain is Enolase (427 aa).

Residue Gln163 participates in (2R)-2-phosphoglycerate binding. The active-site Proton donor is the Glu205. The Mg(2+) site is built by Asp242, Glu285, and Asp312. 4 residues coordinate (2R)-2-phosphoglycerate: Lys337, Arg366, Ser367, and Lys388. The Proton acceptor role is filled by Lys337.

Belongs to the enolase family. Requires Mg(2+) as cofactor.

The protein localises to the cytoplasm. Its subcellular location is the secreted. It localises to the cell surface. The catalysed reaction is (2R)-2-phosphoglycerate = phosphoenolpyruvate + H2O. It functions in the pathway carbohydrate degradation; glycolysis; pyruvate from D-glyceraldehyde 3-phosphate: step 4/5. Its function is as follows. Catalyzes the reversible conversion of 2-phosphoglycerate (2-PG) into phosphoenolpyruvate (PEP). It is essential for the degradation of carbohydrates via glycolysis. This chain is Enolase, found in Bradyrhizobium sp. (strain ORS 278).